A 378-amino-acid polypeptide reads, in one-letter code: Non-functional pseudokinase ZRK6 (378 aa).

Residues 34-378 enclose the Protein kinase domain; sequence DGKCNPIKNF…SNNRSQMSSI (345 aa). ATP contacts are provided by residues 40–48 and Lys-83; that span reads IKNFSYDQI.

The protein belongs to the protein kinase superfamily. Ser/Thr protein kinase family. ZRK subfamily. In terms of assembly, interacts with RPP13L4/ZAR1.

In Arabidopsis thaliana (Mouse-ear cress), this protein is Non-functional pseudokinase ZRK6.